Consider the following 369-residue polypeptide: Transmembrane protein adipocyte-associated 1 (369 aa).

A glycan (N-linked (GlcNAc...) asparagine) is linked at Asn20. 7 helical membrane passes run 45–65 (LLLLIPNVLFFIFLLWKLPLA), 73–93 (SSPIFITFYILVFVVALVGIA), 120–140 (FFLLAIELSVIILGLAFGHLE), 148–168 (VLAITTVLSLAYSVTQGTLEI), 189–209 (QFWLVSSCFFFLVYSLVVILP), 237–257 (LLQGLGSALLCANIIVGLCCV), and 262–282 (FLYFSFFAPLIYVAFLRGFFG). Asn329 is a glycosylation site (N-linked (GlcNAc...) asparagine).

This sequence belongs to the UPF0359 family. Ubiquitous, with higher levels in heart, brain, lung, liver and kidney.

Its subcellular location is the membrane. This chain is Transmembrane protein adipocyte-associated 1 (Tpra1), found in Mus musculus (Mouse).